The sequence spans 387 residues: Pepsin-3 (387 aa).

The signal sequence occupies residues 1–15 (MKWLLLLGLLALSEC). Residues 16–59 (IIHKVPLVRKKSLRKNLIEKGLLKDYLKTHTPNLATKYLPKAAF) constitute a propeptide, activation peptide. One can recognise a Peptidase A1 domain in the interval 75–384 (YFGTIGIGTP…DRANNQLGLA (310 aa)). D93 is a catalytic residue. Intrachain disulfides connect C106-C111 and C267-C271. D276 is an active-site residue. C310 and C343 are disulfide-bonded.

Belongs to the peptidase A1 family.

The protein localises to the secreted. It catalyses the reaction Preferential cleavage: hydrophobic, preferably aromatic, residues in P1 and P1' positions. Cleaves 1-Phe-|-Val-2, 4-Gln-|-His-5, 13-Glu-|-Ala-14, 14-Ala-|-Leu-15, 15-Leu-|-Tyr-16, 16-Tyr-|-Leu-17, 23-Gly-|-Phe-24, 24-Phe-|-Phe-25 and 25-Phe-|-Tyr-26 bonds in the B chain of insulin.. Shows particularly broad specificity; although bonds involving phenylalanine and leucine are preferred, many others are also cleaved to some extent. This Oryctolagus cuniculus (Rabbit) protein is Pepsin-3.